Here is a 230-residue protein sequence, read N- to C-terminus: Ribosomal RNA small subunit methyltransferase G (230 aa).

Residues Gly-80, Phe-85, 131–132, and Arg-145 contribute to the S-adenosyl-L-methionine site; that span reads VE.

It belongs to the methyltransferase superfamily. RNA methyltransferase RsmG family.

The protein localises to the cytoplasm. It carries out the reaction guanosine(527) in 16S rRNA + S-adenosyl-L-methionine = N(7)-methylguanosine(527) in 16S rRNA + S-adenosyl-L-homocysteine. Its function is as follows. Specifically methylates the N7 position of guanine in position 527 of 16S rRNA. The chain is Ribosomal RNA small subunit methyltransferase G from Novosphingobium aromaticivorans (strain ATCC 700278 / DSM 12444 / CCUG 56034 / CIP 105152 / NBRC 16084 / F199).